The primary structure comprises 288 residues: 33 kDa chaperonin (288 aa).

2 disulfides stabilise this stretch: C235–C237 and C268–C271.

It belongs to the HSP33 family. Post-translationally, under oxidizing conditions two disulfide bonds are formed involving the reactive cysteines. Under reducing conditions zinc is bound to the reactive cysteines and the protein is inactive.

The protein localises to the cytoplasm. Its function is as follows. Redox regulated molecular chaperone. Protects both thermally unfolding and oxidatively damaged proteins from irreversible aggregation. Plays an important role in the bacterial defense system toward oxidative stress. In Streptococcus thermophilus (strain ATCC BAA-250 / LMG 18311), this protein is 33 kDa chaperonin.